Here is a 119-residue protein sequence, read N- to C-terminus: NAD(P)H-quinone oxidoreductase subunit M (119 aa).

The protein belongs to the complex I NdhM subunit family. NDH-1 can be composed of about 15 different subunits; different subcomplexes with different compositions have been identified which probably have different functions.

Its subcellular location is the cellular thylakoid membrane. It catalyses the reaction a plastoquinone + NADH + (n+1) H(+)(in) = a plastoquinol + NAD(+) + n H(+)(out). The enzyme catalyses a plastoquinone + NADPH + (n+1) H(+)(in) = a plastoquinol + NADP(+) + n H(+)(out). Its function is as follows. NDH-1 shuttles electrons from an unknown electron donor, via FMN and iron-sulfur (Fe-S) centers, to quinones in the respiratory and/or the photosynthetic chain. The immediate electron acceptor for the enzyme in this species is believed to be plastoquinone. Couples the redox reaction to proton translocation, and thus conserves the redox energy in a proton gradient. Cyanobacterial NDH-1 also plays a role in inorganic carbon-concentration. In Gloeothece citriformis (strain PCC 7424) (Cyanothece sp. (strain PCC 7424)), this protein is NAD(P)H-quinone oxidoreductase subunit M.